A 240-amino-acid chain; its full sequence is tRNA pseudouridine synthase A (240 aa).

Asp50 functions as the Nucleophile in the catalytic mechanism. Tyr109 lines the substrate pocket.

The protein belongs to the tRNA pseudouridine synthase TruA family. Homodimer.

The catalysed reaction is uridine(38/39/40) in tRNA = pseudouridine(38/39/40) in tRNA. Formation of pseudouridine at positions 38, 39 and 40 in the anticodon stem and loop of transfer RNAs. This chain is tRNA pseudouridine synthase A, found in Campylobacter jejuni (strain RM1221).